Consider the following 226-residue polypeptide: Probable amino-acid ABC transporter permease protein YckA (226 aa).

The region spanning 27–215 is the ABC transmembrane type-1 domain; that stretch reads IGYTLLISFV…AICSIAAVFQ (189 aa). The next 5 helical transmembrane spans lie at 31 to 51, 73 to 93, 94 to 114, 160 to 180, and 194 to 214; these read LLISFVSMFAGTVIGLFISLA, VPILVILFILYFGFPYIGIEF, SAVTAALIGFSLNSAAYIAEI, VLLDLIKASSLAAMITVPELL, and MTMYILTALIYWAICSIAAVF.

It belongs to the binding-protein-dependent transport system permease family. HisMQ subfamily.

It localises to the cell membrane. Part of a binding-protein-dependent transport system. Probably responsible for the translocation of the substrate across the membrane. This Bacillus subtilis (strain 168) protein is Probable amino-acid ABC transporter permease protein YckA (yckA).